The following is a 106-amino-acid chain: UPF0145 protein CTC_01500 (106 aa).

Belongs to the UPF0145 family.

The polypeptide is UPF0145 protein CTC_01500 (Clostridium tetani (strain Massachusetts / E88)).